A 319-amino-acid chain; its full sequence is MLVSDRDKLEDKALIPLDNIFHNGKGTLVQASVTSVEKEKTGGFVVLDNGEKLPFYVLVVATGSKWSGPVDFPSKPEDVTKWISEQRKKFKDAKNIVIAGGGSVGLELSGEIKDIWPEKSVTIVHSQKKLLNSVYPDKFRDRAAQAYRPRTKLVLDDQIPGELTPGATSVTTRNGKTITADLIVPAWGNKPNTALLSSLKDVLSPNGCVKIRDTFQTQAYPDIFALGDIIDVNEQKQAGKAQAHAGMVAANVLSYVQGQPLKQKYKGSYELIVITNGKNDGVGYFGVWWGIVIGGWLASLLKAKDLMLPATRVATGASK.

The FAD site is built by arginine 6, aspartate 18, and lysine 25. NAD(+) is bound by residues lysine 129 and glycine 188. NADP(+) is bound by residues lysine 129 and glycine 188. FAD contacts are provided by aspartate 228 and tyrosine 265. Aspartate 228 lines the 6-hydroxy-FAD pocket. An NAD(+)-binding site is contributed by tyrosine 265. Position 265 (tyrosine 265) interacts with NADP(+). The chain crosses the membrane as a helical span at residues 281–301; that stretch reads GVGYFGVWWGIVIGGWLASLL.

It belongs to the FAD-dependent oxidoreductase family.

It is found in the membrane. Its function is as follows. Probable FAD-dependent oxidoreductase that plays a role in the regulation of fruiting body development. The chain is FAD-dependent oxidoreductase FVFD30 from Flammulina velutipes (Agaricus velutipes).